Here is a 371-residue protein sequence, read N- to C-terminus: Putative RNA-binding protein Luc7-like 1 (371 aa).

2 coiled-coil regions span residues 87 to 177 and 218 to 259; these read MDHL…RNSM and FIQI…LSRR. Over residues 232-257 the composition is skewed to basic and acidic residues; that stretch reads VAEKQEKRNQDRLRRREEREREERLS. The interval 232-371 is disordered; it reads VAEKQEKRNQ…RSEEKEAGEI (140 aa). The span at 258 to 317 shows a compositional bias: basic residues; it reads RRSGSRTRDRRRSRSRDRRRRRSRSTSRERRKLSRSRSRDRHRRHRSRSRSHSRGHRRAS. Basic and acidic residues-rich tracts occupy residues 318–351 and 361–371; these read RDRS…DWRL and RRSEEKEAGEI. Phosphoserine is present on residues serine 332, serine 336, and serine 363.

The protein belongs to the Luc7 family. As to expression, ubiquitous.

Functionally, may bind to RNA via its Arg/Ser-rich domain. The chain is Putative RNA-binding protein Luc7-like 1 (LUC7L) from Homo sapiens (Human).